We begin with the raw amino-acid sequence, 298 residues long: Osmoprotective compounds uptake permease protein GgtD (298 aa).

The next 7 membrane-spanning stretches (helical) occupy residues 26–46 (IHIA…GLFI), 97–117 (IAVP…YAFA), 126–146 (LLFI…LIPV), 158–178 (TFLG…IYLL), 207–227 (LIVP…FLWV), 231–251 (LLVA…TIQL), and 263–283 (YLLT…FFGL). In terms of domain architecture, ABC transmembrane type-1 spans 91-283 (FLNSLTIAVP…IVPLMVFFGL (193 aa)).

Belongs to the binding-protein-dependent transport system permease family. The complex is composed of two ATP-binding proteins (GgtA), two transmembrane proteins (GgtC and GgtD) and a solute-binding protein (GgtB).

The protein resides in the cell membrane. Part of the ABC transporter complex GgtABCD involved in the uptake of the osmoprotective compounds glucosylglycerol (GG), sucrose and trehalose. Responsible for the translocation of the substrate across the membrane. This chain is Osmoprotective compounds uptake permease protein GgtD, found in Synechocystis sp. (strain ATCC 27184 / PCC 6803 / Kazusa).